We begin with the raw amino-acid sequence, 277 residues long: Large ribosomal subunit protein uL2 (277 aa).

The disordered stretch occupies residues 222–277 (GSVMNPNDHPHGGGEGKSPVGHPGPLTPWGKPALGLKTRKNKKYSDKFIIKRKNKK).

Belongs to the universal ribosomal protein uL2 family. As to quaternary structure, part of the 50S ribosomal subunit. Forms a bridge to the 30S subunit in the 70S ribosome.

In terms of biological role, one of the primary rRNA binding proteins. Required for association of the 30S and 50S subunits to form the 70S ribosome, for tRNA binding and peptide bond formation. It has been suggested to have peptidyltransferase activity; this is somewhat controversial. Makes several contacts with the 16S rRNA in the 70S ribosome. The chain is Large ribosomal subunit protein uL2 from Clostridium kluyveri (strain NBRC 12016).